The chain runs to 59 residues: Small EDRK-rich factor 2 (59 aa).

Composition is skewed to basic and acidic residues over residues 1-30 (MTRGNQRELARQKNMKKQSDSVKGKRRDDG) and 50-59 (KANEKKEEPK). Residues 1 to 59 (MTRGNQRELARQKNMKKQSDSVKGKRRDDGLSAAARKQRDSEIMQQKQKKANEKKEEPK) are disordered.

Belongs to the SERF family.

Positive regulator of amyloid protein aggregation and proteotoxicity. Induces conformational changes in amyloid proteins, such as HTT, driving them into compact formations preceding the formation of aggregates. This Plecturocebus moloch (Dusky titi monkey) protein is Small EDRK-rich factor 2 (SERF2).